Reading from the N-terminus, the 403-residue chain is Coenzyme A biosynthesis bifunctional protein CoaBC (403 aa).

A phosphopantothenoylcysteine decarboxylase region spans residues 1 to 197 (MLHHVKLIYA…LHPKSLEGKR (197 aa)). Residues 198–403 (VLVTAGATRE…RLWDEIEKML (206 aa)) form a phosphopantothenate--cysteine ligase region. Residues D287, K297, and F330 each contribute to the CTP site.

In the N-terminal section; belongs to the HFCD (homo-oligomeric flavin containing Cys decarboxylase) superfamily. The protein in the C-terminal section; belongs to the PPC synthetase family. Requires Mg(2+) as cofactor. The cofactor is FMN.

It catalyses the reaction N-[(R)-4-phosphopantothenoyl]-L-cysteine + H(+) = (R)-4'-phosphopantetheine + CO2. It carries out the reaction (R)-4'-phosphopantothenate + L-cysteine + CTP = N-[(R)-4-phosphopantothenoyl]-L-cysteine + CMP + diphosphate + H(+). It participates in cofactor biosynthesis; coenzyme A biosynthesis. In terms of biological role, catalyzes two sequential steps in the biosynthesis of coenzyme A. In the first step cysteine is conjugated to 4'-phosphopantothenate to form 4-phosphopantothenoylcysteine. In the second step the latter compound is decarboxylated to form 4'-phosphopantotheine. This chain is Coenzyme A biosynthesis bifunctional protein CoaBC, found in Thermococcus kodakarensis (strain ATCC BAA-918 / JCM 12380 / KOD1) (Pyrococcus kodakaraensis (strain KOD1)).